A 292-amino-acid polypeptide reads, in one-letter code: Homoserine kinase (292 aa).

84 to 94 (PLSRGLGSSSA) is an ATP binding site.

It belongs to the GHMP kinase family. Homoserine kinase subfamily.

It is found in the cytoplasm. It catalyses the reaction L-homoserine + ATP = O-phospho-L-homoserine + ADP + H(+). It functions in the pathway amino-acid biosynthesis; L-threonine biosynthesis; L-threonine from L-aspartate: step 4/5. Its function is as follows. Catalyzes the ATP-dependent phosphorylation of L-homoserine to L-homoserine phosphate. This chain is Homoserine kinase, found in Campylobacter jejuni subsp. jejuni serotype O:6 (strain 81116 / NCTC 11828).